Here is a 159-residue protein sequence, read N- to C-terminus: SsrA-binding protein (159 aa).

Basic and acidic residues predominate over residues 137 to 147 (LAERQANRETE). The tract at residues 137–159 (LAERQANRETEQAVGRRLKGMHD) is disordered.

Belongs to the SmpB family.

It is found in the cytoplasm. Required for rescue of stalled ribosomes mediated by trans-translation. Binds to transfer-messenger RNA (tmRNA), required for stable association of tmRNA with ribosomes. tmRNA and SmpB together mimic tRNA shape, replacing the anticodon stem-loop with SmpB. tmRNA is encoded by the ssrA gene; the 2 termini fold to resemble tRNA(Ala) and it encodes a 'tag peptide', a short internal open reading frame. During trans-translation Ala-aminoacylated tmRNA acts like a tRNA, entering the A-site of stalled ribosomes, displacing the stalled mRNA. The ribosome then switches to translate the ORF on the tmRNA; the nascent peptide is terminated with the 'tag peptide' encoded by the tmRNA and targeted for degradation. The ribosome is freed to recommence translation, which seems to be the essential function of trans-translation. The sequence is that of SsrA-binding protein from Nocardioides sp. (strain ATCC BAA-499 / JS614).